The primary structure comprises 410 residues: MVLSQRQRDELNRAIADYLRSNGYEEAYSTFKKEAELDVNDELDKKFAGLLEKKWTSVIRLQKKVMELESKLNEAKEEITLGGPVGQKRDPKEWIPRPPEKYALSGHRSPVTRVIFHPVFSLMVSASEDATIKVWDYEAGDFERTLKGHTDSVQDISFDQTGKLLASCSADMTIKLWDFQGFECIRTMHGHDHNVSSVAIMPNGDHIVSASRDKTMKMWEVATGYCVKTFTGHREWVRMVRPNQDGTLLASCSNDQTVRVWVVATKECKAELREHEHVVECISWAPESAHPTISEATGSENKKSGKPGPFLLSGSRDKTIKMWDISTGMCLMTLVGHDNWVRGVLFHPGGRFVVSCADDKTLRIWDYKNKRCMKTLSAHEHFVTSLDFHKASPYVVTGSVDQTVKVWECR.

A LisH domain is found at 7 to 39; that stretch reads QRDELNRAIADYLRSNGYEEAYSTFKKEAELDV. Residues 56 to 82 adopt a coiled-coil conformation; it reads TSVIRLQKKVMELESKLNEAKEEITLG. WD repeat units follow at residues 106-147, 148-187, 190-229, 232-271, 274-333, 336-377, and 379-410; these read GHRS…RTLK, GHTDSVQDISFDQTGKLLASCSADMTIKLWDFQGFECIRT, GHDHNVSSVAIMPNGDHIVSASRDKTMKMWEVATGYCVKT, GHREWVRMVRPNQDGTLLASCSNDQTVRVWVVATKECKAE, EHEH…CLMT, GHDN…KTLS, and HEHFVTSLDFHKASPYVVTGSVDQTVKVWECR.

This sequence belongs to the WD repeat LIS1/nudF family. Can self-associate. Component of the cytosolic PAF-AH (I) heterotetrameric enzyme, which is composed of PAFAH1B1 (beta), PAFAH1B2 (alpha2) and PAFAH1B3 (alpha1) subunits. The catalytic activity of the enzyme resides in the alpha1 (PAFAH1B3) and alpha2 (PAFAH1B2) subunits, whereas the beta subunit (PAFAH1B1) has regulatory activity. Trimer formation is not essential for the catalytic activity. Interacts with dynein, dynactin, nde1 and ndel1. As to expression, enriched in the photoreceptor cell layer.

Its subcellular location is the cytoplasm. The protein localises to the cytoskeleton. The protein resides in the microtubule organizing center. It is found in the centrosome. In terms of biological role, regulatory subunit (beta subunit) of the cytosolic type I platelet-activating factor (PAF) acetylhydrolase (PAF-AH (I)), an enzyme that catalyzes the hydrolyze of the acetyl group at the sn-2 position of PAF and its analogs and participates in the PAF inactivation. Regulates the PAF-AH (I) activity in a catalytic dimer composition-dependent manner. Positively regulates the activity of the minus-end directed microtubule motor protein dynein. May enhance dynein-mediated microtubule sliding by targeting dynein to the microtubule plus end. Required for several dynein- and microtubule-dependent processes such as the maintenance of Golgi integrity, the peripheral transport of microtubule fragments and the coupling of the nucleus and centrosome. May be required for proliferation of neuronal precursors and neuronal migration. Involved in the positioning of nuclei in photoreceptor cells. The protein is Lissencephaly-1 homolog B (pafah1b1b) of Danio rerio (Zebrafish).